Consider the following 89-residue polypeptide: Small ribosomal subunit protein uS15 (89 aa).

The protein belongs to the universal ribosomal protein uS15 family. Part of the 30S ribosomal subunit. Forms a bridge to the 50S subunit in the 70S ribosome, contacting the 23S rRNA.

In terms of biological role, one of the primary rRNA binding proteins, it binds directly to 16S rRNA where it helps nucleate assembly of the platform of the 30S subunit by binding and bridging several RNA helices of the 16S rRNA. Functionally, forms an intersubunit bridge (bridge B4) with the 23S rRNA of the 50S subunit in the ribosome. In Bartonella tribocorum (strain CIP 105476 / IBS 506), this protein is Small ribosomal subunit protein uS15.